The chain runs to 364 residues: Histidinol-phosphate aminotransferase 1 (364 aa).

K211 is subject to N6-(pyridoxal phosphate)lysine.

Belongs to the class-II pyridoxal-phosphate-dependent aminotransferase family. Histidinol-phosphate aminotransferase subfamily. Homodimer. It depends on pyridoxal 5'-phosphate as a cofactor.

The catalysed reaction is L-histidinol phosphate + 2-oxoglutarate = 3-(imidazol-4-yl)-2-oxopropyl phosphate + L-glutamate. The protein operates within amino-acid biosynthesis; L-histidine biosynthesis; L-histidine from 5-phospho-alpha-D-ribose 1-diphosphate: step 7/9. The polypeptide is Histidinol-phosphate aminotransferase 1 (Legionella pneumophila (strain Lens)).